A 93-amino-acid chain; its full sequence is MDGIKYAVFTDKSIRLLGKNQYTSNVESGSTRTEIKHWVELFFGVKVIAMNSHRLPGKSRRMGPIMGHTMHYRRMIITLQPGYSIPPLRKKRT.

This sequence belongs to the universal ribosomal protein uL23 family. Part of the 50S ribosomal subunit.

The protein resides in the plastid. It localises to the chloroplast. Its function is as follows. Binds to 23S rRNA. The polypeptide is Large ribosomal subunit protein uL23cz/uL23cy (rpl23-A) (Atropa belladonna (Belladonna)).